The following is a 489-amino-acid chain: Hydantoin permease (489 aa).

Transmembrane regions (helical) follow at residues 30-50 (FSLA…IAAG), 58-78 (VWQV…LLFF), 104-124 (LIPI…QTWL), 144-164 (LWIV…ITFI), 167-187 (MNVF…YLML), 207-227 (MPFS…VVSI), 258-278 (LGMV…MVLV), 299-321 (AILF…NLLS), 339-359 (GVIV…AGVL), 362-382 (FLNL…SDYF), 405-424 (RGVN…VSFL), and 428-445 (LMFV…IPAM). The Na(+) site is built by Ala-38 and Ile-41. Gln-121 contacts substrate. Gly-219 is a binding site for substrate. Na(+) contacts are provided by Ala-309, Ser-312, and Thr-313. Asn-318 contacts substrate. The tract at residues 468–489 (PIGPVAPADESATANTKEQNQR) is disordered. Residues 479-489 (ATANTKEQNQR) are compositionally biased toward polar residues.

It belongs to the purine-cytosine permease (2.A.39) family.

It is found in the membrane. Inhibited by dinitrophenol, 5-(2-naphthylmethyl)-D-hydantoin (D-NMH), 5-(2-naphthylmethyl)-L-hydantoin (L-NMH), 5-bromovinylhydantoin (BVH) and 5-indolylmethyl-L-hydantoin (L-IMH). The affinity of benzyl-hydantoin is increased over 10-fold in the presence of 15 mM of sodium. Nucleobase-proton symporter that mediates the sodium-dependent binding and uptake of 5-aryl-substituted hydantoin compounds. 5-indolyl methyl hydantoin and 5-benzyl hydantoin are the preferred substrates, with selectivity for a hydrophobic substituent in position 5 of hydantoin and for the L isomer over the D isomer. The protein is Hydantoin permease of Microbacterium maritypicum (Microbacterium liquefaciens).